The following is a 627-amino-acid chain: Serine/threonine-protein phosphatase 2A 56 kDa regulatory subunit delta 2 isoform (627 aa).

A disordered region spans residues 1–37; that stretch reads MKGLRSKFVKALSLKDEQGSHKNGHSKSHYISKNGSY.

It belongs to the phosphatase 2A regulatory subunit B family. As to quaternary structure, PP2A consists of a common heterodimeric core enzyme, composed of a 36 kDa catalytic subunit (subunit C) and a 65 kDa constant regulatory subunit (PR65 or subunit A), that associates with a variety of regulatory subunits. Proteins that associate with the core dimer include three families of regulatory subunits B (the R2/B/PR55/B55, R3/B''/PR72/PR130/PR59 and R5/B'/B56 families), the 48 kDa variable regulatory subunit, viral proteins, and cell signaling molecules.

Its subcellular location is the cytoplasm. The protein localises to the cell tip. Its function is as follows. The B regulatory subunit might modulate substrate selectivity and catalytic activity, and might also direct the localization of the catalytic enzyme to a particular subcellular compartment. Has a role in cell shape control and septum formation. The protein is Serine/threonine-protein phosphatase 2A 56 kDa regulatory subunit delta 2 isoform (par2) of Schizosaccharomyces pombe (strain 972 / ATCC 24843) (Fission yeast).